The chain runs to 1379 residues: Hepatocyte growth factor receptor (1379 aa).

The N-terminal stretch at 1-24 (MKAPTVLAPGILVLLLSLVQRSHG) is a signal peptide. Residues 25-931 (ECKEALVKSE…VIVQPDQNFA (907 aa)) lie on the Extracellular side of the membrane. Residues 27–514 (KEALVKSEMN…TGKKITKIPL (488 aa)) form the Sema domain. Residue Asn-45 is glycosylated (N-linked (GlcNAc...) asparagine). Cystine bridges form between Cys-95-Cys-101, Cys-98-Cys-160, Cys-133-Cys-141, and Cys-171-Cys-174. Asn-106 carries an N-linked (GlcNAc...) asparagine glycan. 2 N-linked (GlcNAc...) asparagine glycosylation sites follow: Asn-201 and Asn-357. Disulfide bonds link Cys-297–Cys-362 and Cys-384–Cys-396. Asn-398 and Asn-404 each carry an N-linked (GlcNAc...) asparagine glycan. Cystine bridges form between Cys-519/Cys-537, Cys-525/Cys-560, Cys-528/Cys-544, and Cys-540/Cys-550. IPT/TIG domains follow at residues 562-654 (PAVY…FSYV), 656-738 (PVIT…FSYR), and 741-835 (PVVY…LTYV). O-linked (Man) threonine glycosylation occurs at Thr-581. Asn-606 and Asn-634 each carry an N-linked (GlcNAc...) asparagine glycan. O-linked (Man) threonine glycosylation is found at Thr-675 and Thr-760. Asn-784 and Asn-878 each carry an N-linked (GlcNAc...) asparagine glycan. The chain crosses the membrane as a helical span at residues 932 to 954 (GLIIGAVSISVVVLLLSGLFLWM). Over 955–1379 (RKRKHKDLGS…QDNIDGEGNT (425 aa)) the chain is Cytoplasmic. At Ser-964 the chain carries Phosphoserine. At Thr-975 the chain carries Phosphothreonine. 3 positions are modified to phosphoserine: Ser-988, Ser-995, and Ser-998. The residue at position 1001 (Tyr-1001) is a Phosphotyrosine. Residues 1076-1343 (VHFNEVIGRG…RISSIFSTFI (268 aa)) form the Protein kinase domain. ATP is bound by residues 1082–1090 (IGRGHFGCV) and Lys-1108. The Proton acceptor role is filled by Asp-1202. The interval 1210-1379 (LDEKFTVKVA…QDNIDGEGNT (170 aa)) is interaction with RANBP9. Tyr-1228 is subject to Phosphotyrosine. A phosphotyrosine; by autocatalysis mark is found at Tyr-1232 and Tyr-1233. Thr-1287 carries the phosphothreonine modification. The segment at 1318–1357 (WHPKAEMRPSFSELVSRISSIFSTFIGEHYVHVNATYVNV) is interaction with MUC20. Phosphotyrosine; by autocatalysis occurs at positions 1347 and 1354. Residue Tyr-1363 is modified to Phosphotyrosine.

Belongs to the protein kinase superfamily. Tyr protein kinase family. In terms of assembly, heterodimer made of an alpha chain (50 kDa) and a beta chain (145 kDa) which are disulfide linked. Binds PLXNB1. Interacts when phosphorylated with downstream effectors including STAT3, PIK3R1, SRC, PCLG1, GRB2 and GAB1. When phosphorylated at Tyr-1354, interacts with INPPL1/SHIP2. Interacts with RANBP9 and RANBP10. Interacts with INPP5D/SHIP1. Interacts with SPSB1, SPSB2, SPSB4 and probably SPSB3. SPSB1 binding occurs in the presence and in the absence of HGF, however HGF treatment has a positive effect on this interaction. Interacts with MUC20; prevents interaction with GRB2 and suppresses hepatocyte growth factor-induced cell proliferation. Interacts with GRB10. Interacts with PTPN1 and PTPN2. Interacts with HSP90AA1 and HSP90AB1; the interaction suppresses MET kinase activity. Interacts with tensin TNS3. Interacts (when phosphorylated) with tensin TNS4 (via SH2 domain); the interaction increases MET protein stability by inhibiting MET endocytosis and subsequent lysosomal degradation. As to quaternary structure, (Microbial infection) Interacts with L.monocytogenes InlB. InlB probably dimerizes upon binding to MET, which encourages subsequent dimerization of MET. Autophosphorylated in response to ligand binding on Tyr-1232 and Tyr-1233 in the kinase domain leading to further phosphorylation of Tyr-1347 and Tyr-1354 in the C-terminal multifunctional docking site. Dephosphorylated by PTPRJ at Tyr-1347 and Tyr-1363. Dephosphorylated by PTPN1 and PTPN2. Post-translationally, ubiquitinated. Ubiquitination by CBL regulates MET endocytosis, resulting in decreasing plasma membrane receptor abundance, and in endosomal degradation and/or recycling of internalized receptors. In terms of processing, O-mannosylation of IPT/TIG domains by TMEM260 is required for protein maturation. O-mannosylated residues are composed of single mannose glycans that are not elongated or modified. (Microbial infection) Tyrosine phosphorylation is stimulated by L.monocytogenes InlB.

Its subcellular location is the membrane. It catalyses the reaction L-tyrosyl-[protein] + ATP = O-phospho-L-tyrosyl-[protein] + ADP + H(+). In its inactive state, the C-terminal tail interacts with the catalytic domain and inhibits the kinase activity. Upon ligand binding, the C-terminal tail is displaced and becomes phosphorylated, thus increasing the kinase activity. Functionally, receptor tyrosine kinase that transduces signals from the extracellular matrix into the cytoplasm by binding to hepatocyte growth factor/HGF ligand. Regulates many physiological processes including proliferation, scattering, morphogenesis and survival. Ligand binding at the cell surface induces autophosphorylation of MET on its intracellular domain that provides docking sites for downstream signaling molecules. Following activation by ligand, interacts with the PI3-kinase subunit PIK3R1, PLCG1, SRC, GRB2, STAT3 or the adapter GAB1. Recruitment of these downstream effectors by MET leads to the activation of several signaling cascades including the RAS-ERK, PI3 kinase-AKT, or PLCgamma-PKC. The RAS-ERK activation is associated with the morphogenetic effects while PI3K/AKT coordinates prosurvival effects. During embryonic development, MET signaling plays a role in gastrulation, development and migration of neuronal precursors, angiogenesis and kidney formation. During skeletal muscle development, it is crucial for the migration of muscle progenitor cells and for the proliferation of secondary myoblasts. In adults, participates in wound healing as well as organ regeneration and tissue remodeling. Also promotes differentiation and proliferation of hematopoietic cells. May regulate cortical bone osteogenesis. In terms of biological role, (Microbial infection) Acts as a receptor for Listeria monocytogenes internalin InlB, mediating entry of the pathogen into cells. The sequence is that of Hepatocyte growth factor receptor (Met) from Mus musculus (Mouse).